The primary structure comprises 341 residues: GTPase Obg (341 aa).

The 159-residue stretch at Met1–Ile159 folds into the Obg domain. An OBG-type G domain is found at Ala160–Asp327. GTP is bound by residues Gly166–Ser173, Phe191–His195, Asp212–Gly215, Ser279–Asp282, and Ser308–Val310. Mg(2+) is bound by residues Ser173 and Thr193.

It belongs to the TRAFAC class OBG-HflX-like GTPase superfamily. OBG GTPase family. In terms of assembly, monomer. The cofactor is Mg(2+).

It is found in the cytoplasm. An essential GTPase which binds GTP, GDP and possibly (p)ppGpp with moderate affinity, with high nucleotide exchange rates and a fairly low GTP hydrolysis rate. Plays a role in control of the cell cycle, stress response, ribosome biogenesis and in those bacteria that undergo differentiation, in morphogenesis control. The protein is GTPase Obg of Brucella abortus biovar 1 (strain 9-941).